Consider the following 38-residue polypeptide: Large ribosomal subunit protein bL36c (38 aa).

Belongs to the bacterial ribosomal protein bL36 family.

It localises to the plastid. The protein resides in the apicoplast. The chain is Large ribosomal subunit protein bL36c (rpl36) from Theileria parva (East coast fever infection agent).